A 218-amino-acid chain; its full sequence is Putative NAD(P)H nitroreductase SH0546 (218 aa).

It belongs to the nitroreductase family. The cofactor is FMN.

The chain is Putative NAD(P)H nitroreductase SH0546 from Staphylococcus haemolyticus (strain JCSC1435).